Reading from the N-terminus, the 270-residue chain is Putative pyruvate, phosphate dikinase regulatory protein (270 aa).

Position 148–155 (148–155 (GISRTSKT)) interacts with ADP.

It belongs to the pyruvate, phosphate/water dikinase regulatory protein family. PDRP subfamily.

The catalysed reaction is N(tele)-phospho-L-histidyl/L-threonyl-[pyruvate, phosphate dikinase] + ADP = N(tele)-phospho-L-histidyl/O-phospho-L-threonyl-[pyruvate, phosphate dikinase] + AMP + H(+). It catalyses the reaction N(tele)-phospho-L-histidyl/O-phospho-L-threonyl-[pyruvate, phosphate dikinase] + phosphate + H(+) = N(tele)-phospho-L-histidyl/L-threonyl-[pyruvate, phosphate dikinase] + diphosphate. Its function is as follows. Bifunctional serine/threonine kinase and phosphorylase involved in the regulation of the pyruvate, phosphate dikinase (PPDK) by catalyzing its phosphorylation/dephosphorylation. The protein is Putative pyruvate, phosphate dikinase regulatory protein of Bacillus cereus (strain AH187).